The chain runs to 472 residues: Inactive CLIP domain-containing serine protease A3 (472 aa).

2 helical membrane passes run 51 to 71 and 78 to 98; these read ISFV…WSSM and LPAL…HTYA. Asn-122, Asn-133, Asn-149, and Asn-152 each carry an N-linked (GlcNAc...) asparagine glycan. Residues 223 to 470 form the Peptidase S1 domain; that stretch reads VAAAKAPAAG…YVPWITSTVS (248 aa). Cystine bridges form between Cys-354/Cys-428, Cys-386/Cys-408, and Cys-418/Cys-446.

This sequence belongs to the peptidase S1 family. CLIP subfamily. Expressed at highest levels in head and salivary gland. Expressed in ovary and carcass. Minimal expression in midgut.

The protein resides in the membrane. Probable inactive serine protease. Induces migration of cultured mouse embryonic fibroblasts. In terms of biological role, (Microbial infection) Promotes dengue virus type 2 replication in the host. The polypeptide is Inactive CLIP domain-containing serine protease A3 (Aedes aegypti (Yellowfever mosquito)).